The primary structure comprises 455 residues: Venom prothrombin activator nigrarin-D (455 aa).

A signal peptide spans 1 to 20 (MAPPLLLCLILTFLWNLPEA). A propeptide spanning residues 21-40 (ESNVFLKSKVANRFLQRTKR) is cleaved from the precursor. The region spanning 41–86 (SNSIFEEFKAGNIERECIEEKCSKEEAREVFEDNEKTETFWNVYVD) is the Gla domain. E46, E47, E54, E56, E59, E60, E65, E66, E69, E72, and E75 each carry 4-carboxyglutamate. The cysteines at positions 57 and 62 are disulfide-linked. An EGF-like 1; calcium-binding domain is found at 86 to 122 (DGDQCSSNPCHYRGTCKDGIGSYTCTCLPNYEGKNCE). 11 disulfides stabilise this stretch: C90/C101, C95/C110, C112/C121, C129/C140, C136/C149, C151/C164, C172/C328, C216/C221, C236/C252, C376/C390, and C401/C429. An O-linked (Hex...) serine glycan is attached at S92. One can recognise an EGF-like 2 domain in the interval 129–164 (CRVFNGNCWHFCKSVQNEIQCSCAESYRLGDDGHSC). Residues 182–209 (REASLPDFVQSQKAILLKKSDNPSPDIR) constitute a propeptide, activation peptide. Residues 210–453 (IINGMDCKLG…FIPWIKAIMS (244 aa)) enclose the Peptidase S1 domain. Catalysis depends on H251, which acts as the Charge relay system. N-linked (GlcNAc...) asparagine glycosylation occurs at N254. D308 serves as the catalytic Charge relay system. The active-site Charge relay system is the S405.

The protein belongs to the peptidase S1 family. Snake venom subfamily. As to quaternary structure, heterodimer of a light chain and a heavy chain; disulfide-linked. In terms of processing, the vitamin K-dependent, enzymatic carboxylation of some glutamate residues allows the modified protein to bind calcium. As to expression, expressed by the venom gland.

It is found in the secreted. The catalysed reaction is Selective cleavage of Arg-|-Thr and then Arg-|-Ile bonds in prothrombin to form thrombin.. Snake prothrombin activator that attacks the hemostatic system of prey. This protein is functionally similar to blood coagulation factor Xa. In Cryptophis nigrescens (Eastern small-eyed snake), this protein is Venom prothrombin activator nigrarin-D.